The chain runs to 277 residues: NADPH-dependent 7-cyano-7-deazaguanine reductase (277 aa).

Residue 83-85 (VES) participates in substrate binding. 85-86 (SK) is a binding site for NADPH. Cysteine 184 serves as the catalytic Thioimide intermediate. The Proton donor role is filled by aspartate 191. 223–224 (HE) provides a ligand contact to substrate. 252–253 (RG) provides a ligand contact to NADPH.

The protein belongs to the GTP cyclohydrolase I family. QueF type 2 subfamily. As to quaternary structure, homodimer.

It is found in the cytoplasm. It catalyses the reaction 7-aminomethyl-7-carbaguanine + 2 NADP(+) = 7-cyano-7-deazaguanine + 2 NADPH + 3 H(+). Its pathway is tRNA modification; tRNA-queuosine biosynthesis. In terms of biological role, catalyzes the NADPH-dependent reduction of 7-cyano-7-deazaguanine (preQ0) to 7-aminomethyl-7-deazaguanine (preQ1). The protein is NADPH-dependent 7-cyano-7-deazaguanine reductase of Cupriavidus metallidurans (strain ATCC 43123 / DSM 2839 / NBRC 102507 / CH34) (Ralstonia metallidurans).